Reading from the N-terminus, the 294-residue chain is Cuticle collagen 144 (294 aa).

The first 30 residues, Met1–Thr30, serve as a signal peptide directing secretion. Positions Thr100–Pro112 are enriched in pro residues. Disordered regions lie at residues Thr100–Pro134 and Pro148–Ala278. Triple-helical region stretches follow at residues Pro102–Asp127 and Gly153–Pro274. Low complexity-rich tracts occupy residues Ala164–Asp209 and Ala219–Pro265.

In terms of assembly, collagen polypeptide chains are complexed within the cuticle by disulfide bonds and other types of covalent cross-links.

Its function is as follows. Nematode cuticles are composed largely of collagen-like proteins. The cuticle functions both as an exoskeleton and as a barrier to protect the worm from its environment. The protein is Cuticle collagen 144 of Caenorhabditis briggsae.